Reading from the N-terminus, the 78-residue chain is MIIPWQEIDQETLNNLMESIVLREGTDYGSQELSFETKVEQLKQRLKSGEAVIVYSELHESVDVVNKDSVTGNEPDGQ.

The protein belongs to the UPF0270 family.

This Idiomarina loihiensis (strain ATCC BAA-735 / DSM 15497 / L2-TR) protein is UPF0270 protein IL0325.